Reading from the N-terminus, the 266-residue chain is Undecaprenyl-diphosphatase 1 (266 aa).

8 helical membrane-spanning segments follow: residues 1–21, 39–59, 87–107, 114–134, 149–169, 183–203, 218–238, and 246–266; these read MDTFQVIILALIQGLTEFLPI, QGLSFDVAVNTGSLFAVVIYF, WWIILATLPAVFFGFMAKDFI, TGVIAVTTVVFGLLLWWADKM, ALLIGFAQALALIPGTSRSGA, AAARFSFLMSVPVSLGAAILV, ALTLGTVISFAAAYLCIHYFL, and MTPFVIYRLALGAVLCGFIFL.

The protein belongs to the UppP family.

The protein resides in the cell inner membrane. The enzyme catalyses di-trans,octa-cis-undecaprenyl diphosphate + H2O = di-trans,octa-cis-undecaprenyl phosphate + phosphate + H(+). Its function is as follows. Catalyzes the dephosphorylation of undecaprenyl diphosphate (UPP). Confers resistance to bacitracin. This is Undecaprenyl-diphosphatase 1 from Shewanella oneidensis (strain ATCC 700550 / JCM 31522 / CIP 106686 / LMG 19005 / NCIMB 14063 / MR-1).